A 389-amino-acid polypeptide reads, in one-letter code: Innexin-6 (389 aa).

A run of 4 helical transmembrane segments spans residues valine 36–isoleucine 56, valine 111–alanine 131, leucine 190–leucine 210, and leucine 276–phenylalanine 296.

This sequence belongs to the pannexin family.

Its subcellular location is the cell membrane. The protein resides in the cell junction. It is found in the gap junction. In terms of biological role, structural component of the gap junctions. The protein is Innexin-6 (inx-6) of Caenorhabditis elegans.